A 330-amino-acid polypeptide reads, in one-letter code: Syntaxin-121 (330 aa).

Residues 1 to 10 (MNNLFSSSWK) are compositionally biased toward polar residues. The interval 1–39 (MNNLFSSSWKRTGGGGGGDGDIESGGGVEMAPPPGAAAG) is disordered. At 1-284 (MNNLFSSSWK…RKHQKSTRKW (284 aa)) the chain is on the cytoplasmic side. A compositionally biased stretch (gly residues) spans 12 to 28 (TGGGGGGDGDIESGGGV). One can recognise a t-SNARE coiled-coil homology domain in the interval 212 to 274 (VAEIQERHGA…DRGREQLVVA (63 aa)). Residues 285–305 (TCIAIIILLVLILVVVLPIVL) form a helical; Anchor for type IV membrane protein membrane-spanning segment. The Vesicular segment spans residues 306–330 (KFVNNNKSSSSSPAPATPSPPPPTA). The disordered stretch occupies residues 311-330 (NKSSSSSPAPATPSPPPPTA). Pro residues predominate over residues 320 to 330 (PATPSPPPPTA).

The protein belongs to the syntaxin family. As to quaternary structure, interacts with SNAP32. As to expression, expressed in roots, stems, leaf blades and leaf sheaths.

The protein resides in the cell membrane. In terms of biological role, vesicle trafficking protein that functions in the secretory pathway. Involved in plant defense by mediating host resistance to the rice blast fungus Magnaporthe oryzae. The interaction with SNAP32 may contribute to host resistance to the rice blast fungus. In Oryza sativa subsp. japonica (Rice), this protein is Syntaxin-121.